The primary structure comprises 29 residues: Trypsin inhibitor 4 (29 aa).

Cystine bridges form between Cys-3–Cys-20, Cys-10–Cys-22, and Cys-16–Cys-28.

This sequence belongs to the protease inhibitor I7 (squash-type serine protease inhibitor) family.

The protein localises to the secreted. Strongly inhibits trypsin, weakly inhibits chymotrypsin. The polypeptide is Trypsin inhibitor 4 (Cyclanthera pedata (Achocha)).